The sequence spans 798 residues: Peregrinol diphosphate synthase TPS1, chloroplastic (798 aa).

The N-terminal 25 residues, 1 to 25 (MASLSTPNINNTTFVNSKTQLPAVK), are a transit peptide targeting the chloroplast. Lys-243 contributes to the substrate binding site. Mg(2+)-binding residues include Asp-377 and Asp-379. The DXDD motif signature appears at 377–380 (DLDD). Lys-463 is a substrate binding site.

It belongs to the terpene synthase family. It depends on Mg(2+) as a cofactor. Mostly expressed in trichomes of leaves and fruits.

Its subcellular location is the plastid. The protein resides in the chloroplast. The enzyme catalyses peregrinol diphosphate = (2E,6E,10E)-geranylgeranyl diphosphate + H2O. It participates in secondary metabolite biosynthesis; terpenoid biosynthesis. Functionally, involved in the biosynthesis of labdane-type diterpenoid including cleroda-dienols, and peregrinol lactones and furan derivatives, dopaminergic diterpenoids that can bind to dopamine receptors in the human pituitary gland, have probably ability to lower prolactin levels, and are used to treat menstrual cycle disorders (e.g. premenstrual syndrome and mastodynia). Terpene synthase that produces peregrinol diphosphate from geranylgeranyl diphosphate (GGPP). The chain is Peregrinol diphosphate synthase TPS1, chloroplastic from Vitex agnus-castus (Chaste tree).